A 171-amino-acid polypeptide reads, in one-letter code: Co-chaperone protein HscB homolog (171 aa).

Residues 2-74 (NHFELFGLPN…VSRAEYILSE (73 aa)) enclose the J domain.

Belongs to the HscB family. In terms of assembly, interacts with HscA and stimulates its ATPase activity.

Functionally, co-chaperone involved in the maturation of iron-sulfur cluster-containing proteins. Seems to help targeting proteins to be folded toward HscA. This chain is Co-chaperone protein HscB homolog, found in Aliivibrio fischeri (strain ATCC 700601 / ES114) (Vibrio fischeri).